Reading from the N-terminus, the 201-residue chain is Small ribosomal subunit protein uS10m (201 aa).

This sequence belongs to the universal ribosomal protein uS10 family. As to quaternary structure, component of the mitochondrial small ribosomal subunit (mt-SSU). Mature mammalian 55S mitochondrial ribosomes consist of a small (28S) and a large (39S) subunit. The 28S small subunit contains a 12S ribosomal RNA (12S mt-rRNA) and 30 different proteins. The 39S large subunit contains a 16S rRNA (16S mt-rRNA), a copy of mitochondrial valine transfer RNA (mt-tRNA(Val)), which plays an integral structural role, and 52 different proteins.

The protein resides in the mitochondrion. This chain is Small ribosomal subunit protein uS10m (MRPS10), found in Homo sapiens (Human).